Consider the following 22-residue polypeptide: 2.4 kDa venom peptide (22 aa).

In terms of processing, contains 2 disulfide bonds. In terms of tissue distribution, expressed by the venom gland.

The protein resides in the secreted. Its function is as follows. Not lethal to mice by intraperitoneal or intracerebroventricular injections in doses up to 150 micrograms. In Heterometrus spinifer (Asia giant forest scorpion), this protein is 2.4 kDa venom peptide.